The chain runs to 304 residues: Large ribosomal subunit protein uL18y (304 aa).

Belongs to the universal ribosomal protein uL18 family. Component of the large ribosomal subunit (LSU).

The protein localises to the cytoplasm. It localises to the nucleus. Component of the ribosome, a large ribonucleoprotein complex responsible for the synthesis of proteins in the cell. The small ribosomal subunit (SSU) binds messenger RNAs (mRNAs) and translates the encoded message by selecting cognate aminoacyl-transfer RNA (tRNA) molecules. The large subunit (LSU) contains the ribosomal catalytic site termed the peptidyl transferase center (PTC), which catalyzes the formation of peptide bonds, thereby polymerizing the amino acids delivered by tRNAs into a polypeptide chain. The nascent polypeptides leave the ribosome through a tunnel in the LSU and interact with protein factors that function in enzymatic processing, targeting, and the membrane insertion of nascent chains at the exit of the ribosomal tunnel. The sequence is that of Large ribosomal subunit protein uL18y (RPL5B) from Oryza sativa subsp. japonica (Rice).